The primary structure comprises 168 residues: Lipoprotein signal peptidase (168 aa).

4 consecutive transmembrane segments (helical) span residues 15 to 35, 47 to 67, 75 to 95, and 107 to 127; these read WLWL…IVME, VLPF…SFLS, WLFT…MSKL, and AMII…GFVV. Residues Asp128 and Asp146 contribute to the active site. A helical membrane pass occupies residues 141 to 161; that stretch reads AFNLADTAICLGAAMIILDGF.

Belongs to the peptidase A8 family.

Its subcellular location is the cell inner membrane. The catalysed reaction is Release of signal peptides from bacterial membrane prolipoproteins. Hydrolyzes -Xaa-Yaa-Zaa-|-(S,diacylglyceryl)Cys-, in which Xaa is hydrophobic (preferably Leu), and Yaa (Ala or Ser) and Zaa (Gly or Ala) have small, neutral side chains.. It functions in the pathway protein modification; lipoprotein biosynthesis (signal peptide cleavage). This protein specifically catalyzes the removal of signal peptides from prolipoproteins. The chain is Lipoprotein signal peptidase from Vibrio vulnificus (strain CMCP6).